The following is a 310-amino-acid chain: Olfactory receptor 9Q1 (310 aa).

Topologically, residues 1–25 are extracellular; sequence MAEMNLTLVTEFLLIAFTEYPEWAL. Residue asparagine 5 is glycosylated (N-linked (GlcNAc...) asparagine). The helical transmembrane segment at 26 to 46 threads the bilayer; sequence PLFLLFLFMYLITVLGNLEMI. Residues 47–54 are Cytoplasmic-facing; that stretch reads ILILMDHQ. Residues 55 to 75 form a helical membrane-spanning segment; it reads LHAPMYFLLSHLAFMDVCYSS. Topologically, residues 76-99 are extracellular; the sequence is ITVPQMLAVLLEHGAALSYTRCAA. Cysteines 97 and 189 form a disulfide. The chain crosses the membrane as a helical span at residues 100–120; it reads QFFLFTFFGSIDCYLLALMAY. The Cytoplasmic segment spans residues 121–139; it reads DRYLAVCQPLLYVTILTQQ. Residues 140–160 traverse the membrane as a helical segment; that stretch reads ARLSLVAGAYVAGLISALVRT. Residues 161 to 197 are Extracellular-facing; that stretch reads VSAFTLSFCGTSEIDFIFCDLPPLLKLTCGESYTQEV. Residues 198-217 form a helical membrane-spanning segment; sequence LIIMFAIFVIPASMVVILVS. The Cytoplasmic portion of the chain corresponds to 218–236; sequence YLFIIVAIMGIPAGSQAKT. The chain crosses the membrane as a helical span at residues 237 to 257; sequence FSTCTSHLTAVSLFFGTLIFM. At 258 to 270 the chain is on the extracellular side; that stretch reads YLRGNSDQSSEKN. The helical transmembrane segment at 271 to 291 threads the bilayer; that stretch reads RVVSVLYTEVIPMLNPLIYSL. Over 292–310 the chain is Cytoplasmic; the sequence is RNKEVKEALRKILNRAKLS.

This sequence belongs to the G-protein coupled receptor 1 family.

The protein localises to the cell membrane. Odorant receptor. In Homo sapiens (Human), this protein is Olfactory receptor 9Q1 (OR9Q1).